Reading from the N-terminus, the 607-residue chain is Pyruvate decarboxylase 2 (607 aa).

The interval 1 to 22 (MDTKIGSIDACNPTNHDIGGPP) is disordered. Aspartate 69 and histidine 156 together coordinate substrate. The segment at 434–516 (DSWFNCQKLK…FLINNGGYTI (83 aa)) is thiamine pyrophosphate binding. Positions 484, 511, and 513 each coordinate Mg(2+). Glutamate 517 serves as a coordination point for substrate.

This sequence belongs to the TPP enzyme family. In terms of assembly, homotetramer. A metal cation is required as a cofactor. Thiamine diphosphate serves as cofactor. Expressed at low levels in roots, shoots, flowers, siliques and seeds.

It catalyses the reaction a 2-oxocarboxylate + H(+) = an aldehyde + CO2. This chain is Pyruvate decarboxylase 2 (PDC2), found in Arabidopsis thaliana (Mouse-ear cress).